A 222-amino-acid polypeptide reads, in one-letter code: Octanoyltransferase (222 aa).

In terms of domain architecture, BPL/LPL catalytic spans 34–214; it reads GEKNSTVLIL…EFSKHDEALV (181 aa). Substrate contacts are provided by residues 72–79, 144–146, and 157–159; these read RGGKLTWH, AIG, and GVA. The Acyl-thioester intermediate role is filled by C175.

This sequence belongs to the LipB family.

It localises to the cytoplasm. The enzyme catalyses octanoyl-[ACP] + L-lysyl-[protein] = N(6)-octanoyl-L-lysyl-[protein] + holo-[ACP] + H(+). The protein operates within protein modification; protein lipoylation via endogenous pathway; protein N(6)-(lipoyl)lysine from octanoyl-[acyl-carrier-protein]: step 1/2. Its function is as follows. Catalyzes the transfer of endogenously produced octanoic acid from octanoyl-acyl-carrier-protein onto the lipoyl domains of lipoate-dependent enzymes. Lipoyl-ACP can also act as a substrate although octanoyl-ACP is likely to be the physiological substrate. The sequence is that of Octanoyltransferase from Paenarthrobacter aurescens (strain TC1).